The chain runs to 192 residues: 7-methyl-GTP pyrophosphatase (192 aa).

D69 serves as the catalytic Proton acceptor.

Belongs to the Maf family. YceF subfamily. It depends on a divalent metal cation as a cofactor.

The protein resides in the cytoplasm. It carries out the reaction N(7)-methyl-GTP + H2O = N(7)-methyl-GMP + diphosphate + H(+). In terms of biological role, nucleoside triphosphate pyrophosphatase that hydrolyzes 7-methyl-GTP (m(7)GTP). May have a dual role in cell division arrest and in preventing the incorporation of modified nucleotides into cellular nucleic acids. The sequence is that of 7-methyl-GTP pyrophosphatase (maf-2) from Pseudomonas putida (strain ATCC 47054 / DSM 6125 / CFBP 8728 / NCIMB 11950 / KT2440).